We begin with the raw amino-acid sequence, 125 residues long: Small ribosomal subunit protein uS12 (125 aa).

The interval 1-24 (MPTISQLVRKPRKAKRTKSKVPAL) is disordered. Residues 9–19 (RKPRKAKRTKS) are compositionally biased toward basic residues. A 3-methylthioaspartic acid modification is found at Asp89. A disordered region spans residues 101 to 125 (SLDTAGVKDRKQARSKYGSKRPKSA). The segment covering 113–125 (ARSKYGSKRPKSA) has biased composition (basic residues).

Belongs to the universal ribosomal protein uS12 family. As to quaternary structure, part of the 30S ribosomal subunit. Contacts proteins S8 and S17. May interact with IF1 in the 30S initiation complex.

Functionally, with S4 and S5 plays an important role in translational accuracy. In terms of biological role, interacts with and stabilizes bases of the 16S rRNA that are involved in tRNA selection in the A site and with the mRNA backbone. Located at the interface of the 30S and 50S subunits, it traverses the body of the 30S subunit contacting proteins on the other side and probably holding the rRNA structure together. The combined cluster of proteins S8, S12 and S17 appears to hold together the shoulder and platform of the 30S subunit. In Nitrosomonas europaea (strain ATCC 19718 / CIP 103999 / KCTC 2705 / NBRC 14298), this protein is Small ribosomal subunit protein uS12.